The sequence spans 503 residues: UDP-N-acetylmuramoylalanine--D-glutamate ligase (503 aa).

129–135 provides a ligand contact to ATP; it reads GTNGKTT.

The protein belongs to the MurCDEF family.

It is found in the cytoplasm. It carries out the reaction UDP-N-acetyl-alpha-D-muramoyl-L-alanine + D-glutamate + ATP = UDP-N-acetyl-alpha-D-muramoyl-L-alanyl-D-glutamate + ADP + phosphate + H(+). It participates in cell wall biogenesis; peptidoglycan biosynthesis. Its function is as follows. Cell wall formation. Catalyzes the addition of glutamate to the nucleotide precursor UDP-N-acetylmuramoyl-L-alanine (UMA). This Burkholderia orbicola (strain MC0-3) protein is UDP-N-acetylmuramoylalanine--D-glutamate ligase.